A 219-amino-acid chain; its full sequence is Small ribosomal subunit protein uS3c (219 aa).

One can recognise a KH type-2 domain in the interval 39–111 (IRKFLMEKIK…NSFFNVKINF (73 aa)).

Belongs to the universal ribosomal protein uS3 family. In terms of assembly, part of the 30S ribosomal subunit.

The protein resides in the plastid. This chain is Small ribosomal subunit protein uS3c (rps3), found in Euglena longa (Euglenophycean alga).